Consider the following 79-residue polypeptide: RNA-binding protein Hfq (79 aa).

A Sm domain is found at 9–69 (DTFLNHLRKE…ISTFTPQRPV (61 aa)).

It belongs to the Hfq family. In terms of assembly, homohexamer.

Its function is as follows. RNA chaperone that binds small regulatory RNA (sRNAs) and mRNAs to facilitate mRNA translational regulation in response to envelope stress, environmental stress and changes in metabolite concentrations. Also binds with high specificity to tRNAs. In Brevibacillus brevis (strain 47 / JCM 6285 / NBRC 100599), this protein is RNA-binding protein Hfq.